Consider the following 521-residue polypeptide: Cytochrome P450 1A1 (521 aa).

Position 229 (Phe229) interacts with substrate. Cys463 serves as a coordination point for heme.

Belongs to the cytochrome P450 family. Heme serves as cofactor.

It is found in the endoplasmic reticulum membrane. The protein resides in the microsome membrane. It catalyses the reaction an organic molecule + reduced [NADPH--hemoprotein reductase] + O2 = an alcohol + oxidized [NADPH--hemoprotein reductase] + H2O + H(+). Functionally, cytochromes P450 are a group of heme-thiolate monooxygenases. They oxidize a variety of structurally unrelated compounds, including steroids, fatty acids, and xenobiotics. The protein is Cytochrome P450 1A1 (cyp1a1) of Sparus aurata (Gilthead sea bream).